The following is a 610-amino-acid chain: Elongation factor 4 (610 aa).

Residues 15–197 (KSIRNFSIIA…RIINDIPYPK (183 aa)) enclose the tr-type G domain. GTP contacts are provided by residues 27–32 (DHGKST) and 144–147 (NKID).

This sequence belongs to the TRAFAC class translation factor GTPase superfamily. Classic translation factor GTPase family. LepA subfamily.

It is found in the cell membrane. The catalysed reaction is GTP + H2O = GDP + phosphate + H(+). Required for accurate and efficient protein synthesis under certain stress conditions. May act as a fidelity factor of the translation reaction, by catalyzing a one-codon backward translocation of tRNAs on improperly translocated ribosomes. Back-translocation proceeds from a post-translocation (POST) complex to a pre-translocation (PRE) complex, thus giving elongation factor G a second chance to translocate the tRNAs correctly. Binds to ribosomes in a GTP-dependent manner. The chain is Elongation factor 4 from Buchnera aphidicola subsp. Acyrthosiphon pisum (strain APS) (Acyrthosiphon pisum symbiotic bacterium).